We begin with the raw amino-acid sequence, 224 residues long: Oxaloacetate tautomerase FAHD2, mitochondrial (224 aa).

Residues 1 to 30 (MATSMIQRLFKQGTKIVGVGLNYASHAKEL) constitute a mitochondrion transit peptide. 3 residues coordinate Mg(2+): Glu-67, Glu-69, and Asp-98.

Belongs to the FAH family. Requires Mg(2+) as cofactor. The cofactor is Mn(2+).

It localises to the mitochondrion. The enzyme catalyses oxaloacetate = enol-oxaloacetate. In terms of biological role, tautomerase that converts enol-oxaloacetate, a strong inhibitor of succinate dehydrogenase, to the physiological keto form of oxaloacetate. This Arabidopsis thaliana (Mouse-ear cress) protein is Oxaloacetate tautomerase FAHD2, mitochondrial.